Here is a 461-residue protein sequence, read N- to C-terminus: Propionyl-CoA carboxylase regulator (461 aa).

Residues 11 to 65 form the HTH cro/C1-type domain; sequence LRELRVKLGLTQKVFAERLGASLPYLNQMENNHRPVSATVVLALAQEFGVDVTKL. Residues 22-41 constitute a DNA-binding region (H-T-H motif); that stretch reads QKVFAERLGASLPYLNQMEN.

This sequence belongs to the short-chain fatty acyl-CoA assimilation regulator (ScfR) family.

Transcriptional regulator that controls propionyl-CoA assimilation through the methylmalonyl-CoA pathway via regulation of pccB expression. The protein is Propionyl-CoA carboxylase regulator of Cereibacter sphaeroides (strain ATCC 17023 / DSM 158 / JCM 6121 / CCUG 31486 / LMG 2827 / NBRC 12203 / NCIMB 8253 / ATH 2.4.1.) (Rhodobacter sphaeroides).